The following is a 292-amino-acid chain: Protease HtpX (292 aa).

2 helical membrane-spanning segments follow: residues Ile-5–Val-25 and Ser-34–Leu-54. A Zn(2+)-binding site is contributed by His-140. Glu-141 is a catalytic residue. His-144 contributes to the Zn(2+) binding site. 2 consecutive transmembrane segments (helical) span residues Leu-155–Ile-175 and Ile-193–Phe-213. Glu-218 provides a ligand contact to Zn(2+).

This sequence belongs to the peptidase M48B family. Zn(2+) serves as cofactor.

It is found in the cell inner membrane. This chain is Protease HtpX, found in Xanthomonas oryzae pv. oryzae (strain PXO99A).